A 930-amino-acid polypeptide reads, in one-letter code: Alanine--tRNA ligase (930 aa).

Residues His595, His599, Cys700, and His704 each contribute to the Zn(2+) site.

It belongs to the class-II aminoacyl-tRNA synthetase family. Zn(2+) serves as cofactor.

It localises to the cytoplasm. The catalysed reaction is tRNA(Ala) + L-alanine + ATP = L-alanyl-tRNA(Ala) + AMP + diphosphate. Its function is as follows. Catalyzes the attachment of alanine to tRNA(Ala) in a two-step reaction: alanine is first activated by ATP to form Ala-AMP and then transferred to the acceptor end of tRNA(Ala). Also edits incorrectly charged Ser-tRNA(Ala) and Gly-tRNA(Ala) via its editing domain. The protein is Alanine--tRNA ligase of Malacoplasma penetrans (strain HF-2) (Mycoplasma penetrans).